The following is a 595-amino-acid chain: Probable L-gulonolactone oxidase 1 (595 aa).

The signal sequence occupies residues 1–18 (MAFWLSLIFFCFCTFASS). Residues 47–229 (SICEAAKVEY…SQVTFQLQPM (183 aa)) form the FAD-binding PCMH-type domain.

The protein belongs to the oxygen-dependent FAD-linked oxidoreductase family. The cofactor is FAD.

The enzyme catalyses L-gulono-1,4-lactone + O2 = L-ascorbate + H2O2 + H(+). It functions in the pathway cofactor biosynthesis; L-ascorbate biosynthesis. Functionally, may be involved in the biosynthesis of ascorbic acid. This Arabidopsis thaliana (Mouse-ear cress) protein is Probable L-gulonolactone oxidase 1.